A 652-amino-acid polypeptide reads, in one-letter code: Endoplasmic reticulum chaperone BiP (652 aa).

Positions 1-16 are cleaved as a signal peptide; it reads MRHLLLALLLLGGARA. ATP contacts are provided by residues 34 to 37, Lys-94, 225 to 227, 291 to 298, and 362 to 365; these read GTTY, GGT, EKAKRALS, and GSTR. The interval 123–278 is nucleotide-binding (NBD); the sequence is KPHIQVDVGG…KKKTGKDVRK (156 aa). An interdomain linker region spans residues 407–417; that stretch reads QDTGDLVLLDV. The substrate-binding (SBD) stretch occupies residues 418 to 498; it reads CPLTLGIETV…PRGVPQIEVT (81 aa). The segment at 630-652 is disordered; it reads SKLYGSAGPPPTGEEEAAEKDEL. Over residues 642-652 the composition is skewed to acidic residues; sequence GEEEAAEKDEL. Residues 649–652 carry the Prevents secretion from ER motif; sequence KDEL.

It belongs to the heat shock protein 70 family. Monomer and homooligomer; homooligomerization via the interdomain linker inactivates the chaperone activity and acts as a storage of HSPA5/BiP molecules. Interacts with DNAJC10. Interacts with DNAJB9/ERdj4; leading to recruit HSPA5/BiP to ERN1/IRE1. Interacts with ERN1/IRE1; interaction takes place following interaction with DNAJB9/ERdj4 and leads to inactivate ERN1/IRE1.

It localises to the endoplasmic reticulum lumen. The protein localises to the melanosome. It is found in the cytoplasm. Its subcellular location is the cell surface. The enzyme catalyses ATP + H2O = ADP + phosphate + H(+). With respect to regulation, the chaperone activity is regulated by ATP-induced allosteric coupling of the nucleotide-binding (NBD) and substrate-binding (SBD) domains. In the ADP-bound and nucleotide-free (apo) states, the two domains have little interaction. In contrast, in the ATP-bound state the two domains are tightly coupled, which results in drastically accelerated kinetics in both binding and release of polypeptide substrates. J domain-containing co-chaperones (DNAJB9/ERdj4 or DNAJC10/ERdj5) stimulate the ATPase activity and are required for efficient substrate recognition by HSPA5/BiP. Homooligomerization inactivates participating HSPA5/BiP protomers and probably act as reservoirs to store HSPA5/BiP molecules when they are not needed by the cell. Functionally, endoplasmic reticulum chaperone that plays a key role in protein folding and quality control in the endoplasmic reticulum lumen. Involved in the correct folding of proteins and degradation of misfolded proteins via its interaction with DNAJC10/ERdj5, probably to facilitate the release of DNAJC10/ERdj5 from its substrate. Acts as a key repressor of the EIF2AK3/PERK and ERN1/IRE1-mediated unfolded protein response (UPR). In the unstressed endoplasmic reticulum, recruited by DNAJB9/ERdj4 to the luminal region of ERN1/IRE1, leading to disrupt the dimerization of ERN1/IRE1, thereby inactivating ERN1/IRE1. Also binds and inactivates EIF2AK3/PERK in unstressed cells. Accumulation of misfolded protein in the endoplasmic reticulum causes release of HSPA5/BiP from ERN1/IRE1 and EIF2AK3/PERK, allowing their homodimerization and subsequent activation. May also play a role in apoptosis and cell proliferation. In Gallus gallus (Chicken), this protein is Endoplasmic reticulum chaperone BiP.